We begin with the raw amino-acid sequence, 304 residues long: WW domain-binding protein 1 (304 aa).

Residues M1–P26 form a disordered region. 2 consecutive short sequence motifs (PPxY motif) follow at residues P159–Y162 and P172–Y176. Disordered stretches follow at residues T206 to P235 and C252 to P304. The span at E209 to L218 shows a compositional bias: polar residues.

As to quaternary structure, binds to the WW domain of YAP1, WWP1 and WWP2. Interacts with WWOX. Interacts with NEDD4.

In Mus musculus (Mouse), this protein is WW domain-binding protein 1 (Wbp1).